The following is a 162-amino-acid chain: Dihydrofolate reductase type 3 (162 aa).

The region spanning 2-160 is the DHFR domain; the sequence is LISLIAALAH…YACEFVTLSR (159 aa).

It belongs to the dihydrofolate reductase family. As to quaternary structure, monomer.

The enzyme catalyses (6S)-5,6,7,8-tetrahydrofolate + NADP(+) = 7,8-dihydrofolate + NADPH + H(+). It participates in cofactor biosynthesis; tetrahydrofolate biosynthesis; 5,6,7,8-tetrahydrofolate from 7,8-dihydrofolate: step 1/1. Key enzyme in folate metabolism. Catalyzes an essential reaction for de novo glycine and purine synthesis, and for DNA precursor synthesis. This Salmonella typhimurium protein is Dihydrofolate reductase type 3 (dhfrIII).